The following is a 587-amino-acid chain: Aspartate--tRNA(Asp/Asn) ligase (587 aa).

Glutamate 173 contacts L-aspartate. Positions 197–200 (QLFK) are aspartate. Arginine 219 is an L-aspartate binding site. ATP contacts are provided by residues 219–221 (RDE) and glutamine 228. Histidine 448 provides a ligand contact to L-aspartate. Position 481 (glutamate 481) interacts with ATP. Residue arginine 488 coordinates L-aspartate. Position 533-536 (533-536 (GLDR)) interacts with ATP.

This sequence belongs to the class-II aminoacyl-tRNA synthetase family. Type 1 subfamily. In terms of assembly, homodimer.

It is found in the cytoplasm. It carries out the reaction tRNA(Asx) + L-aspartate + ATP = L-aspartyl-tRNA(Asx) + AMP + diphosphate. In terms of biological role, aspartyl-tRNA synthetase with relaxed tRNA specificity since it is able to aspartylate not only its cognate tRNA(Asp) but also tRNA(Asn). Reaction proceeds in two steps: L-aspartate is first activated by ATP to form Asp-AMP and then transferred to the acceptor end of tRNA(Asp/Asn). In Alcanivorax borkumensis (strain ATCC 700651 / DSM 11573 / NCIMB 13689 / SK2), this protein is Aspartate--tRNA(Asp/Asn) ligase.